The primary structure comprises 320 residues: mRNA decay activator protein ZFP36 (320 aa).

A necessary for nuclear export region spans residues Met1–His15. The interval Met1 to Thr93 is necessary and sufficient for the association with mRNA decay enzymes and mRNA decay activation. Necessary for localization of ARE-containing mRNAs to processing bodies (PBs) stretches follow at residues Met1–Leu167 and Thr93–Glu320. The tract at residues Leu17–Arg50 is disordered. The segment covering Ser27–Arg50 has biased composition (polar residues). The residue at position 53 (Ser53) is a Phosphoserine; by MAPKAPK2. Residue Ser59 is modified to Phosphoserine. The stretch at Pro64–Gly68 is one P-P-P-P-G repeat. A compositionally biased stretch (pro residues) spans Pro66–Thr85. A disordered region spans residues Pro66–Ser95. Ser81 and Ser83 each carry phosphoserine. Thr85 bears the Phosphothreonine mark. Position 86 is a phosphoserine (Ser86). Over residues Ser86–Ser95 the composition is skewed to low complexity. The necessary for nuclear localization stretch occupies residues Thr88 to Pro161. The necessary for RNA-binding stretch occupies residues Thr90–Ala166. 2 consecutive C3H1-type zinc fingers follow at residues Arg96–Gly124 and Lys134–Thr162. The segment at Arg96 to Arg187 is necessary for interaction with PABPN1. Residues Leu167 to Glu320 are necessary for mRNA decay activation. Ser179 is subject to Phosphoserine; by MAPKAPK2. The interval Phe180–Leu310 is disordered. The residue at position 190 (Ser190) is a Phosphoserine. The P-P-P-P-G repeat unit spans residues Pro191–Gly195. Residues Ser197–Ser209 are compositionally biased toward low complexity. At Ser211 the chain carries Phosphoserine. The P-P-P-P-G repeat unit spans residues Pro212–Gly216. Phosphoserine; by MAPK1; in vitro is present on Ser221. Thr251 carries the phosphothreonine modification. Phosphoserine occurs at positions 270 and 290. Residues Ser280–Ser290 are compositionally biased toward low complexity. The span at Pro300–Arg309 shows a compositional bias: pro residues. The interval Pro306 to Glu320 is interaction with CNOT1. At Ser317 the chain carries Phosphoserine.

As to quaternary structure, associates with cytoplasmic CCR4-NOT and PAN2-PAN3 deadenylase complexes to trigger ARE-containing mRNA deadenylation and decay processes. Part of a mRNA decay activation complex at least composed of poly(A)-specific exoribonucleases CNOT6, EXOSC2 and XRN1 and mRNA-decapping enzymes DCP1A and DCP2. Associates with the RNA exosome complex. Interacts (via phosphorylated form) with 14-3-3 proteins; these interactions promote exclusion of ZFP36 from cytoplasmic stress granules in response to arsenite treatment in a MAPKAPK2-dependent manner and does not prevent CCR4-NOT deadenylase complex recruitment or ZFP36-induced ARE-containing mRNA deadenylation and decay processes. Interacts with 14-3-3 proteins; these interactions occur in response to rapamycin in an Akt-dependent manner. Interacts with AGO2 and AGO4. Interacts (via C-terminus) with CNOT1; this interaction occurs in a RNA-independent manner and induces mRNA deadenylation. Interacts (via N-terminus) with CNOT6. Interacts with CNOT6L. Interacts (via C-terminus) with CNOT7; this interaction occurs in a RNA-independent manner, induces mRNA deadenylation and is inhibited in a phosphorylation MAPKAPK2-dependent manner. Interacts (via unphosphorylated form) with CNOT8; this interaction occurs in a RNA-independent manner and is inhibited in a phosphorylation MAPKAPK2-dependent manner. Interacts with DCP1A. Interacts (via N-terminus) with DCP2. Interacts with EDC3. Interacts (via N-terminus) with EXOSC2. Interacts with heat shock 70 kDa proteins. Interacts with KHSRP; this interaction increases upon cytokine-induced treatment. Interacts with MAP3K4; this interaction enhances the association with SH3KBP1/CIN85. Interacts with MAPKAPK2; this interaction occurs upon skeletal muscle satellite cell activation. Interacts with NCL. Interacts with NUP214; this interaction increases upon lipopolysaccharide (LPS) stimulation. Interacts with PABPC1; this interaction occurs in a RNA-dependent manner. Interacts (via hypophosphorylated form) with PABPN1 (via RRM domain and C-terminal arginine-rich region); this interaction occurs in the nucleus in a RNA-independent manner, decreases in presence of single-stranded poly(A) RNA-oligomer and in a p38 MAPK-dependent-manner and inhibits nuclear poly(A) tail synthesis. Interacts with PAN2. Interacts (via C3H1-type zinc finger domains) with PKM. Interacts (via C3H1-type zinc finger domains) with nuclear RNA poly(A) polymerase. Interacts with PPP2CA; this interaction occurs in LPS-stimulated cells and induces ZFP36 dephosphorylation, and hence may promote ARE-containing mRNAs decay. Interacts (via C-terminus) with PRR5L (via C-terminus); this interaction may accelerate ZFP36-mediated mRNA decay during stress. Interacts (via C-terminus) with SFN; this interaction occurs in a phosphorylation-dependent manner. Interacts (via extreme C-terminal region) with SH3KBP1/CIN85 (via SH3 domains); this interaction enhances MAP3K4-induced phosphorylation of ZFP36 at Ser-59 and Ser-86 and does not alter neither ZFP36 binding to ARE-containing transcripts nor TNF-alpha mRNA decay. Interacts with XRN1. Interacts (via C-terminus and Ser-179 phosphorylated form) with YWHAB; this interaction occurs in a p38/MAPKAPK2-dependent manner, increases cytoplasmic localization of ZFP36 and protects ZFP36 from Ser-179 dephosphorylation by serine/threonine phosphatase 2A, and hence may be crucial for stabilizing ARE-containing mRNAs. Interacts (via phosphorylated form) with YWHAE. Interacts (via C-terminus) with YWHAG; this interaction occurs in a phosphorylation-dependent manner. Interacts with YWHAH; this interaction occurs in a phosphorylation-dependent manner. Interacts with YWHAQ; this interaction occurs in a phosphorylation-dependent manner. Interacts with (via C-terminus) YWHAZ; this interaction occurs in a phosphorylation-dependent manner. Does not interact with SH3KBP1. Interacts (via P-P-P-P-G repeats) with GIGYF2; the interaction is direct. In terms of processing, phosphorylated. Phosphorylation at serine and/or threonine residues occurs in a p38 MAPK- and MAPKAPK2-dependent manner. Phosphorylated by MAPKAPK2 at Ser-53 and Ser-179; phosphorylation increases its stability and cytoplasmic localization, promotes binding to 14-3-3 adapter proteins and inhibits the recruitment of cytoplasmic CCR4-NOT and PAN2-PAN3 deadenylase complexes to the mRNA decay machinery, thereby inhibiting ZFP36-induced ARE-containing mRNA deadenylation and decay processes. Phosphorylation by MAPKAPK2 does not impair ARE-containing RNA-binding. Phosphorylated in a MAPKAPK2- and p38 MAPK-dependent manner upon skeletal muscle satellite cell activation; this phosphorylation inhibits ZFP36-mediated mRNA decay activity, and hence stabilizes MYOD1 mRNA. Phosphorylated by MAPK1 upon mitogen stimulation. Phosphorylated at Ser-59 and Ser-86; these phosphorylations increase in a SH3KBP1-dependent manner. Phosphorylated at serine and threonine residues in a pyruvate kinase PKM- and p38 MAPK-dependent manner. Phosphorylation at Ser-53 may participate in the PKM-mediated degradation of ZFP36 in a p38 MAPK-dependent manner. Dephosphorylated by serine/threonine phosphatase 2A at Ser-179. Ubiquitinated; pyruvate kinase (PKM)-dependent ubiquitination leads to proteasomal degradation through a p38 MAPK signaling pathway.

Its subcellular location is the nucleus. It is found in the cytoplasm. The protein localises to the cytoplasmic granule. It localises to the P-body. Functionally, zinc-finger RNA-binding protein that destabilizes numerous cytoplasmic AU-rich element (ARE)-containing mRNA transcripts by promoting their poly(A) tail removal or deadenylation, and hence provide a mechanism for attenuating protein synthesis. Acts as an 3'-untranslated region (UTR) ARE mRNA-binding adapter protein to communicate signaling events to the mRNA decay machinery. Recruits deadenylase CNOT7 (and probably the CCR4-NOT complex) via association with CNOT1, and hence promotes ARE-mediated mRNA deadenylation. Also functions by recruiting components of the cytoplasmic RNA decay machinery to the bound ARE-containing mRNAs. Self regulates by destabilizing its own mRNA. Binds to 3'-UTR ARE of numerous mRNAs. Also binds to ARE of its own mRNA. Plays a role in anti-inflammatory responses; suppresses tumor necrosis factor (TNF)-alpha production by stimulating ARE-mediated TNF-alpha mRNA decay and several other inflammatory ARE-containing mRNAs in interferon (IFN)- and/or lipopolysaccharide (LPS)-induced macrophages. Also plays a role in the regulation of dendritic cell maturation at the post-transcriptional level, and hence operates as part of a negative feedback loop to limit the inflammatory response. Promotes ARE-mediated mRNA decay of hypoxia-inducible factor HIF1A mRNA during the response of endothelial cells to hypoxia. Positively regulates early adipogenesis of preadipocytes by promoting ARE-mediated mRNA decay of immediate early genes (IEGs). Negatively regulates hematopoietic/erythroid cell differentiation by promoting ARE-mediated mRNA decay of the transcription factor STAT5B mRNA. Plays a role in maintaining skeletal muscle satellite cell quiescence by promoting ARE-mediated mRNA decay of the myogenic determination factor MYOD1 mRNA. Also associates with and regulates the expression of non-ARE-containing target mRNAs at the post-transcriptional level, such as MHC class I mRNAs. Participates in association with argonaute RISC catalytic components in the ARE-mediated mRNA decay mechanism; assists microRNA (miRNA) targeting ARE-containing mRNAs. May also play a role in the regulation of cytoplasmic mRNA decapping; enhances decapping of ARE-containing RNAs, in vitro. Involved in the delivery of target ARE-mRNAs to processing bodies (PBs). In addition to its cytosolic mRNA-decay function, affects nuclear pre-mRNA processing. Negatively regulates nuclear poly(A)-binding protein PABPN1-stimulated polyadenylation activity on ARE-containing pre-mRNA during LPS-stimulated macrophages. Also involved in the regulation of stress granule (SG) and P-body (PB) formation and fusion. Plays a role in the regulation of keratinocyte proliferation, differentiation and apoptosis. Plays a role as a tumor suppressor by inhibiting cell proliferation in breast cancer cells. The chain is mRNA decay activator protein ZFP36 from Rattus norvegicus (Rat).